Consider the following 196-residue polypeptide: Small ribosomal subunit protein uS4c (196 aa).

Positions T22–E42 are disordered. The region spanning M89–L169 is the S4 RNA-binding domain.

It belongs to the universal ribosomal protein uS4 family. Part of the 30S ribosomal subunit. Contacts protein S5. The interaction surface between S4 and S5 is involved in control of translational fidelity.

Its subcellular location is the plastid. The protein resides in the chloroplast. Its function is as follows. One of the primary rRNA binding proteins, it binds directly to 16S rRNA where it nucleates assembly of the body of the 30S subunit. In terms of biological role, with S5 and S12 plays an important role in translational accuracy. In Melica altissima (Siberian melic grass), this protein is Small ribosomal subunit protein uS4c (rps4).